Reading from the N-terminus, the 514-residue chain is Light-independent protochlorophyllide reductase subunit B (514 aa).

Asp-36 is a binding site for [4Fe-4S] cluster. Asp-300 serves as the catalytic Proton donor. 435 to 436 (GM) serves as a coordination point for substrate.

The protein belongs to the ChlB/BchB/BchZ family. As to quaternary structure, protochlorophyllide reductase is composed of three subunits; ChlL, ChlN and ChlB. Forms a heterotetramer of two ChlB and two ChlN subunits. [4Fe-4S] cluster is required as a cofactor.

Its subcellular location is the plastid. The protein resides in the chloroplast. The catalysed reaction is chlorophyllide a + oxidized 2[4Fe-4S]-[ferredoxin] + 2 ADP + 2 phosphate = protochlorophyllide a + reduced 2[4Fe-4S]-[ferredoxin] + 2 ATP + 2 H2O. It functions in the pathway porphyrin-containing compound metabolism; chlorophyll biosynthesis (light-independent). In terms of biological role, component of the dark-operative protochlorophyllide reductase (DPOR) that uses Mg-ATP and reduced ferredoxin to reduce ring D of protochlorophyllide (Pchlide) to form chlorophyllide a (Chlide). This reaction is light-independent. The NB-protein (ChlN-ChlB) is the catalytic component of the complex. This is Light-independent protochlorophyllide reductase subunit B from Pleurastrum terricola (Filamentous green alga).